The primary structure comprises 496 residues: Bifunctional protein HldE (496 aa).

A ribokinase region spans residues 1–331 (MDPTPALAEI…AAVHQEEVSA (331 aa)). 206–209 (NRKE) lines the ATP pocket. Asp276 is an active-site residue. A cytidylyltransferase region spans residues 358–496 (FTNGCFDLLH…GGSRRSGDTL (139 aa)).

It in the N-terminal section; belongs to the carbohydrate kinase PfkB family. This sequence in the C-terminal section; belongs to the cytidylyltransferase family. In terms of assembly, homodimer.

It catalyses the reaction D-glycero-beta-D-manno-heptose 7-phosphate + ATP = D-glycero-beta-D-manno-heptose 1,7-bisphosphate + ADP + H(+). It carries out the reaction D-glycero-beta-D-manno-heptose 1-phosphate + ATP + H(+) = ADP-D-glycero-beta-D-manno-heptose + diphosphate. The protein operates within nucleotide-sugar biosynthesis; ADP-L-glycero-beta-D-manno-heptose biosynthesis; ADP-L-glycero-beta-D-manno-heptose from D-glycero-beta-D-manno-heptose 7-phosphate: step 1/4. Its pathway is nucleotide-sugar biosynthesis; ADP-L-glycero-beta-D-manno-heptose biosynthesis; ADP-L-glycero-beta-D-manno-heptose from D-glycero-beta-D-manno-heptose 7-phosphate: step 3/4. Its function is as follows. Catalyzes the phosphorylation of D-glycero-D-manno-heptose 7-phosphate at the C-1 position to selectively form D-glycero-beta-D-manno-heptose-1,7-bisphosphate. In terms of biological role, catalyzes the ADP transfer from ATP to D-glycero-beta-D-manno-heptose 1-phosphate, yielding ADP-D-glycero-beta-D-manno-heptose. In Rhodospirillum rubrum (strain ATCC 11170 / ATH 1.1.1 / DSM 467 / LMG 4362 / NCIMB 8255 / S1), this protein is Bifunctional protein HldE.